Here is a 306-residue protein sequence, read N- to C-terminus: MPKSEIRKLLQEIKKQVDNPGNSSTTEIKKMASEAGIDEQTAEEIYHLLTEFYQAVEEHGGIEKYMHSNISWLKIELELLSACYQIAILEDMKVLDISEMLSLNDLRIFPKTPSQLQNTYYKLKKELIQVEDIPKNKPGRKRKTQKNTKKEKTNIFGKVVPAEFKAPASIKEQISYDKSREKNLVDLLSGVKSNVQLLSENQGEENNVYDLLKSIYSLSSLAVQKEELDKKYQDLQTKCQELEQENSYLKQQNETMTDSFHTLVLQVADFAYASDLDQIQALPLFSQQLVVTLNQLGVFKENYKQM.

The protein localises to the cytoplasm. Transcriptional repressor of flagellar motility genes, such as flaA, during extracellular growth at 37 degrees Celsius and during intracellular infection. Binds directly to the gene promoter region and probably prevents RNA polymerase binding. At low temperatures, MogR repression activity is modulated by the DegU response regulator in an unknown mechanism. Required for full virulence. The protein is Motility gene repressor MogR (mogR) of Listeria monocytogenes serotype 1/2a (strain 10403S).